Consider the following 473-residue polypeptide: FAD-dependent monooxygenase ctvC (473 aa).

3 residues coordinate FAD: Glu-37, Ala-51, and Arg-110. A helical membrane pass occupies residues 218–238 (IGPGFTFLIFPAAGDSLFWVL). Residues Asp-310 and Ala-323 each coordinate FAD. The N-linked (GlcNAc...) asparagine glycan is linked to Asn-358. A helical membrane pass occupies residues 451–471 (LVYCFGVVILLWISWAVFNVN).

Belongs to the paxM FAD-dependent monooxygenase family. The cofactor is FAD.

The protein resides in the membrane. The protein operates within mycotoxin biosynthesis. FAD-dependent monooxygenase; part of the gene cluster that mediates the biosynthesis of citreoviridin, an inhibitor of the of F1-ATPase beta-subunit. The HR-PKS ctvA accepts acetyl-CoA as the starter unit and catalyzes eight iterations of malonyl-CoA extension and four iterations of SAM-dependent methylation at C4, C12, C14, and C16. The KR and DH domains selectively act on the first six iterations to generate the hexaene chain. In the last three iterations, the KR and DH domains terminate their functions to yield a beta,delta-diketo ester moiety, which then undergoes intramolecular cyclization to yield an alpha-pyrone intermediate. Subsequently, ctvB methylates the alpha-pyrone hydroxyl group to generate citreomontanin. In order to form the tetrahydrofuran ring with the correct stereochemistry, the terminal alkenes of citreomontanin need to undergo isomerization to yield a (17Z)-hexaene, a step that could be catalyzed by ctvC. The (17Z)-hexaene then undergoes bisepoxidation by ctvC to form a (17R,16R,15S,14R)-bisepoxide moiety. Lastly, ctvD acts as a regioselective hydrolase to form the tetrahydrofuran ring with the substituents in the correct absolute configuration, completing the biosynthesis of citreoviridin. This Aspergillus terreus (strain NIH 2624 / FGSC A1156) protein is FAD-dependent monooxygenase ctvC.